Consider the following 77-residue polypeptide: uncharacterized protein (77 aa).

A helical membrane pass occupies residues 49 to 71 (LVIASLILAIILLGILYYISYQM).

The protein localises to the membrane. This is an uncharacterized protein from Archaeoglobus fulgidus (strain ATCC 49558 / DSM 4304 / JCM 9628 / NBRC 100126 / VC-16).